We begin with the raw amino-acid sequence, 622 residues long: 1-deoxy-D-xylulose-5-phosphate synthase (622 aa).

Thiamine diphosphate is bound by residues His-80 and 121 to 123 (GHS). Asp-152 provides a ligand contact to Mg(2+). Thiamine diphosphate is bound by residues 153 to 154 (GA), Asn-181, Tyr-288, and Glu-370. Residue Asn-181 participates in Mg(2+) binding.

It belongs to the transketolase family. DXPS subfamily. Homodimer. Requires Mg(2+) as cofactor. Thiamine diphosphate is required as a cofactor.

The catalysed reaction is D-glyceraldehyde 3-phosphate + pyruvate + H(+) = 1-deoxy-D-xylulose 5-phosphate + CO2. The protein operates within metabolic intermediate biosynthesis; 1-deoxy-D-xylulose 5-phosphate biosynthesis; 1-deoxy-D-xylulose 5-phosphate from D-glyceraldehyde 3-phosphate and pyruvate: step 1/1. In terms of biological role, catalyzes the acyloin condensation reaction between C atoms 2 and 3 of pyruvate and glyceraldehyde 3-phosphate to yield 1-deoxy-D-xylulose-5-phosphate (DXP). The polypeptide is 1-deoxy-D-xylulose-5-phosphate synthase (Shewanella baltica (strain OS195)).